A 402-amino-acid chain; its full sequence is Multidrug resistance protein MdtH (402 aa).

11 consecutive transmembrane segments (helical) span residues 13–33 (YFLL…FPLI), 45–65 (ALMV…LGIF), 99–116 (PWLL…GTLF), 139–159 (LLMM…SWLL), 165–185 (LVCA…AWLL), 214–234 (VLTL…LPIM), 244–264 (AVKW…YPIA), 277–297 (LMAG…VGNL), 300–322 (LFTL…ETLS), 340–360 (LGLA…FDMG), and 368–388 (LPWM…GWQF).

This sequence belongs to the major facilitator superfamily. DHA1 family. MdtH (TC 2.A.1.2.21) subfamily.

The protein localises to the cell inner membrane. In Citrobacter koseri (strain ATCC BAA-895 / CDC 4225-83 / SGSC4696), this protein is Multidrug resistance protein MdtH.